The following is a 390-amino-acid chain: Transforming growth factor beta-1 proprotein (390 aa).

The first 29 residues, 1-29, serve as a signal peptide directing secretion; it reads MPPSGLRLLPLLLPLPWLLVLTPGRPAAG. The straightjacket domain stretch occupies residues 30–74; it reads LSTCKTIDMELVKRKRIEAIRGQILSKLRLASPPSQGEVPPGPLP. The arm domain stretch occupies residues 75–271; it reads EAVLALYNST…ATPLERAQHL (197 aa). 3 N-linked (GlcNAc...) asparagine glycosylation sites follow: N82, N136, and N176. The segment at 226 to 252 is bowtie tail; sequence DSKDNKLHVEINGISPKRRGDLGTIHD. The Cell attachment site signature appears at 244–246; sequence RGD. 4 cysteine pairs are disulfide-bonded: C285-C294, C293-C356, C322-C387, and C326-C389.

It belongs to the TGF-beta family. As to quaternary structure, homodimer; disulfide-linked. Interacts with the serine proteases, HTRA1 and HTRA3: the interaction with either inhibits TGFB1-mediated signaling and the HTRA protease activity is required for this inhibition. May interact with THSD4; this interaction may lead to sequestration by FBN1 microfibril assembly and attenuation of TGFB signaling. Interacts with CD109, DPT and ASPN. Interacts with EFEMP2. Interacts with TSKU; the interaction contributes to regulation of the hair cycle. Interacts with TGFBR3. In terms of assembly, homodimer; disulfide-linked. Interacts with transforming growth factor beta-1 (TGF-beta-1) chain; interaction is non-covalent and maintains TGF-beta-1 in a latent state; each latency-associated peptide (LAP) monomer interacts with TGF-beta-1 in the other monomer. Interacts with LTBP1; leading to regulation of TGF-beta-1 activation. Interacts with LRRC32/GARP; leading to regulation of TGF-beta-1 activation on the surface of activated regulatory T-cells (Tregs). Interacts with LRRC33/NRROS; leading to regulation of TGF-beta-1 activation in macrophages and microglia. Interacts (via cell attachment site) with integrins ITGAV and ITGB6 (ITGAV:ITGB6), leading to release of the active TGF-beta-1. Interacts with NREP; the interaction results in a decrease in TGFB1 autoinduction. Interacts with HSP90AB1; inhibits latent TGFB1 activation. Homodimer; disulfide-linked. Interacts with TGF-beta receptors (TGFBR1 and TGFBR2), leading to signal transduction. Post-translationally, transforming growth factor beta-1 proprotein: The precursor proprotein is cleaved in the Golgi apparatus by FURIN to form Transforming growth factor beta-1 (TGF-beta-1) and Latency-associated peptide (LAP) chains, which remain non-covalently linked, rendering TGF-beta-1 inactive. N-glycosylated. Deglycosylation leads to activation of Transforming growth factor beta-1 (TGF-beta-1); mechanisms triggering deglycosylation-driven activation of TGF-beta-1 are however unclear. In terms of tissue distribution, expressed in cardiomyocytes. Weakly expressed in the mammary glands, with a slight increase of expression following onset of involution.

The protein resides in the secreted. The protein localises to the extracellular space. It localises to the extracellular matrix. Functionally, transforming growth factor beta-1 proprotein: Precursor of the Latency-associated peptide (LAP) and Transforming growth factor beta-1 (TGF-beta-1) chains, which constitute the regulatory and active subunit of TGF-beta-1, respectively. Its function is as follows. Required to maintain the Transforming growth factor beta-1 (TGF-beta-1) chain in a latent state during storage in extracellular matrix. Associates non-covalently with TGF-beta-1 and regulates its activation via interaction with 'milieu molecules', such as LTBP1, LRRC32/GARP and LRRC33/NRROS, that control activation of TGF-beta-1. Interaction with LRRC33/NRROS regulates activation of TGF-beta-1 in macrophages and microglia. Interaction with LRRC32/GARP controls activation of TGF-beta-1 on the surface of activated regulatory T-cells (Tregs). Interaction with integrins (ITGAV:ITGB6 or ITGAV:ITGB8) results in distortion of the Latency-associated peptide chain and subsequent release of the active TGF-beta-1. In terms of biological role, multifunctional protein that regulates the growth and differentiation of various cell types and is involved in various processes, such as normal development, immune function, microglia function and responses to neurodegeneration. Activation into mature form follows different steps: following cleavage of the proprotein in the Golgi apparatus, Latency-associated peptide (LAP) and Transforming growth factor beta-1 (TGF-beta-1) chains remain non-covalently linked rendering TGF-beta-1 inactive during storage in extracellular matrix. At the same time, LAP chain interacts with 'milieu molecules', such as LTBP1, LRRC32/GARP and LRRC33/NRROS that control activation of TGF-beta-1 and maintain it in a latent state during storage in extracellular milieus. TGF-beta-1 is released from LAP by integrins (ITGAV:ITGB6 or ITGAV:ITGB8): integrin-binding to LAP stabilizes an alternative conformation of the LAP bowtie tail and results in distortion of the LAP chain and subsequent release of the active TGF-beta-1. Once activated following release of LAP, TGF-beta-1 acts by binding to TGF-beta receptors (TGFBR1 and TGFBR2), which transduce signal. While expressed by many cells types, TGF-beta-1 only has a very localized range of action within cell environment thanks to fine regulation of its activation by Latency-associated peptide chain (LAP) and 'milieu molecules'. Plays an important role in bone remodeling: acts as a potent stimulator of osteoblastic bone formation, causing chemotaxis, proliferation and differentiation in committed osteoblasts. Can promote either T-helper 17 cells (Th17) or regulatory T-cells (Treg) lineage differentiation in a concentration-dependent manner. At high concentrations, leads to FOXP3-mediated suppression of RORC and down-regulation of IL-17 expression, favoring Treg cell development. At low concentrations in concert with IL-6 and IL-21, leads to expression of the IL-17 and IL-23 receptors, favoring differentiation to Th17 cells. Stimulates sustained production of collagen through the activation of CREB3L1 by regulated intramembrane proteolysis (RIP). Mediates SMAD2/3 activation by inducing its phosphorylation and subsequent translocation to the nucleus. Positively regulates odontoblastic differentiation in dental papilla cells, via promotion of IPO7-mediated translocation of phosphorylated SMAD2 to the nucleus and subsequent transcription of target genes. Can induce epithelial-to-mesenchymal transition (EMT) and cell migration in various cell types. In Mus musculus (Mouse), this protein is Transforming growth factor beta-1 proprotein.